Here is a 162-residue protein sequence, read N- to C-terminus: METLPASWVLTLLCLGSHLLQAVISTTVIPSCIPGESEDNCTALVQMEDDPRVAQVQITKCSSDMDGYCLHGQCIYLVDMREKFCRCEVGYTGLRCEHFFLTVHQPLSKEYVALTVILIFLFLIITAGCIYYFCRWYKNRKSKKSREEYERVTSGDPVLPQV.

Positions 1 to 22 (METLPASWVLTLLCLGSHLLQA) are cleaved as a signal peptide. The propeptide occupies 23–55 (VISTTVIPSCIPGESEDNCTALVQMEDDPRVAQ). N40 carries an N-linked (GlcNAc...) asparagine glycan. Topologically, residues 53-112 (VAQVQITKCSSDMDGYCLHGQCIYLVDMREKFCRCEVGYTGLRCEHFFLTVHQPLSKEYV) are extracellular. In terms of domain architecture, EGF-like spans 57-97 (QITKCSSDMDGYCLHGQCIYLVDMREKFCRCEVGYTGLRCE). Disulfide bonds link C61–C74, C69–C85, and C87–C96. Positions 102–162 (TVHQPLSKEY…TSGDPVLPQV (61 aa)) are cleaved as a propeptide — removed in mature form. The chain crosses the membrane as a helical span at residues 113–133 (ALTVILIFLFLIITAGCIYYF). Over 134–162 (CRWYKNRKSKKSREEYERVTSGDPVLPQV) the chain is Cytoplasmic.

In terms of assembly, interacts with EGFR and ERBB4.

The protein localises to the secreted. Its subcellular location is the extracellular space. The protein resides in the cell membrane. In terms of biological role, ligand of the EGF receptor/EGFR and ERBB4. Stimulates EGFR and ERBB4 tyrosine phosphorylation. Contributes to inflammation, wound healing, tissue repair, and oocyte maturation by regulating angiogenesis and vascular remodeling and by stimulating cell proliferation. The protein is Proepiregulin (Ereg) of Mus musculus (Mouse).